The following is a 314-amino-acid chain: Olfactory receptor 5D14 (314 aa).

Residues 1–27 lie on the Extracellular side of the membrane; it reads MMMVLRNLSMEPTFALLGFTDYPKLQI. A glycan (N-linked (GlcNAc...) asparagine) is linked at Asn7. Residues 28 to 48 traverse the membrane as a helical segment; the sequence is PLFLVFLLMYVITVVGNLGMI. The Cytoplasmic portion of the chain corresponds to 49 to 56; it reads IIIKINPK. Residues 57–77 traverse the membrane as a helical segment; that stretch reads FHTPMYFFLSHLSFVDFCYSS. Over 78-101 the chain is Extracellular; the sequence is IVTPKLLENLVMADKSIFYFSCMM. The helical transmembrane segment at 102-122 threads the bilayer; sequence QYFLSCTAVVTESFLLAVMAY. Residues 123–141 lie on the Cytoplasmic side of the membrane; that stretch reads DRFVAICNPLLYTVAMSQR. Residues 142 to 162 form a helical membrane-spanning segment; that stretch reads LCALLVAGSYLWGMFGPLVLL. The Extracellular portion of the chain corresponds to 163–198; sequence CYALRLNFSGPNVINHFFCEYTALISVSGSDILIPH. N-linked (GlcNAc...) asparagine glycosylation is present at Asn169. Residues 199 to 219 form a helical membrane-spanning segment; that stretch reads LLLFSFATFNEMCTLLIILTS. Residues 220-239 lie on the Cytoplasmic side of the membrane; sequence YVFIFVTVLKIRSVSGRHKA. A helical membrane pass occupies residues 240–260; it reads FSTWASHLTSITIFHGTILFL. At 261–273 the chain is on the extracellular side; that stretch reads YCVPNSKNSRQTV. A helical membrane pass occupies residues 274–294; that stretch reads KVASVFYTVVNPMLNPLIYSL. Residues 295-314 are Cytoplasmic-facing; the sequence is RNKDVKDAFWKLIHTQVPFH.

Belongs to the G-protein coupled receptor 1 family.

The protein localises to the cell membrane. Odorant receptor. This chain is Olfactory receptor 5D14 (OR5D14), found in Homo sapiens (Human).